Consider the following 704-residue polypeptide: Preterpestacin I synthase tpcA (704 aa).

The interval 1–329 is terpene cyclase; the sequence is MEQLSYQSKL…CSACPRQNAW (329 aa). Asp96 lines the Mg(2+) pocket. Residues Asp96, Asn231, 235–239, and 325–326 contribute to the substrate site; these read SWERE and RQ. The DDXXD 1 signature appears at 96 to 100; it reads DDGGE. Residues 231–239 carry the NSE/DTE motif; sequence NDYFSWERE. The segment at 330-688 is prenyltransferase; it reads KDMSSQSLNG…MLRLCLAKLS (359 aa). The tract at residues 361–380 is disordered; sequence KDSSFFGSQPSDDEPSLSEV. The isopentenyl diphosphate site is built by Lys406, Arg409, and His438. Residues Asp445 and Asp449 each contribute to the Mg(2+) site. The short motif at 445–449 is the DDXXD 2 element; the sequence is DDLED. Arg454 contacts dimethylallyl diphosphate. Arg455 serves as a coordination point for isopentenyl diphosphate. Lys532, Thr533, Gln568, Asn575, Lys583, and Lys593 together coordinate dimethylallyl diphosphate.

The protein in the N-terminal section; belongs to the terpene synthase family. In the C-terminal section; belongs to the FPP/GGPP synthase family. In terms of assembly, hexamer. The cofactor is Mg(2+).

The enzyme catalyses isopentenyl diphosphate + (2E,6E)-farnesyl diphosphate = (2E,6E,10E)-geranylgeranyl diphosphate + diphosphate. It carries out the reaction isopentenyl diphosphate + (2E,6E,10E)-geranylgeranyl diphosphate = (2E,6E,10E,14E)-geranylfarnesyl diphosphate + diphosphate. Its pathway is secondary metabolite biosynthesis; terpenoid biosynthesis. Functionally, bifunctional terpene synthase; part of the gene cluster that mediates the biosynthesis of terpestacin. The bifunctional terpene synthase tpcA converts isopentenyl diphosphate (IPP) and dimethylallyl diphosphate (DMAPP) into the sesterterpene preterpestacin I. The C-terminal prenyltransferase (PT) domain of tpcA catalyzes formation of GFPP, whereas the N-terminal terpene cyclase (TC) domain catalyzes the cyclization of GFPP into preterpestacin I. The cytochrome P450 monooxygenase tpcB then hydroxylates preterpestacin I to yield 24-hydroxypreterpstacin I (renamed as preterpestacin II) whereas the cytochrome P450 monooxygenase tpcC further hydroxylates preterpestacin II to yield 16,17-dihydroxypreterpestacin II (renamed as preterpestacin III). Finally, the FAD-dependent monooxygenase tpcD converts preterpestacin III into terpestacin. This is Preterpestacin I synthase tpcA from Cochliobolus heterostrophus (strain C5 / ATCC 48332 / race O) (Southern corn leaf blight fungus).